The sequence spans 48 residues: Large ribosomal subunit protein bL34c (48 aa).

Belongs to the bacterial ribosomal protein bL34 family.

It is found in the plastid. Its subcellular location is the chloroplast. The chain is Large ribosomal subunit protein bL34c from Thalassiosira pseudonana (Marine diatom).